Reading from the N-terminus, the 592-residue chain is Arginine--tRNA ligase (592 aa).

Residues 112–122 (VNPNKELHVGH) carry the 'HIGH' region motif.

The protein belongs to the class-I aminoacyl-tRNA synthetase family. As to quaternary structure, monomer.

It localises to the cytoplasm. It catalyses the reaction tRNA(Arg) + L-arginine + ATP = L-arginyl-tRNA(Arg) + AMP + diphosphate. The chain is Arginine--tRNA ligase from Thermus thermophilus (strain ATCC 27634 / DSM 579 / HB8).